The chain runs to 316 residues: Methionyl-tRNA formyltransferase (316 aa).

110 to 113 (SLLP) is a binding site for (6S)-5,6,7,8-tetrahydrofolate.

This sequence belongs to the Fmt family.

It catalyses the reaction L-methionyl-tRNA(fMet) + (6R)-10-formyltetrahydrofolate = N-formyl-L-methionyl-tRNA(fMet) + (6S)-5,6,7,8-tetrahydrofolate + H(+). In terms of biological role, attaches a formyl group to the free amino group of methionyl-tRNA(fMet). The formyl group appears to play a dual role in the initiator identity of N-formylmethionyl-tRNA by promoting its recognition by IF2 and preventing the misappropriation of this tRNA by the elongation apparatus. In Halothermothrix orenii (strain H 168 / OCM 544 / DSM 9562), this protein is Methionyl-tRNA formyltransferase.